We begin with the raw amino-acid sequence, 346 residues long: Elongation factor Ts (346 aa).

Positions 80 to 83 (TDFV) are involved in Mg(2+) ion dislocation from EF-Tu.

The protein belongs to the EF-Ts family.

The protein resides in the cytoplasm. In terms of biological role, associates with the EF-Tu.GDP complex and induces the exchange of GDP to GTP. It remains bound to the aminoacyl-tRNA.EF-Tu.GTP complex up to the GTP hydrolysis stage on the ribosome. In Streptococcus suis (strain 98HAH33), this protein is Elongation factor Ts.